We begin with the raw amino-acid sequence, 401 residues long: MTVRETRFPSSSATATQPDAVVRFCDTTLRDGEQAPGVAFTAAEKLAIAGALDAIGVHQIEAGIPGMGVTERDVLREILATDPKAEIVGWCRADHRDVEAAASCGLVTAHLTIPVSDLHLKSKLERDRAWARRRVRDCVVDGTDRGMRVSVGFEDASRADDAFVTDLAGELRDVGVTRLRWADTVGLLDPVSAYDRLGRLVRAVPGPWEIHAHDDFGLATANTIAAVQAGFTWVSTTVLGLGERAGNAPIEEVAMALRHLLKLPIDLDTTSFRTLAQLVVGWPLPAGKKAVVGESVFAHESGIHVHGILRHPATYEPFDPEVGGRRRLTVGKHSGRASLRHALEQCGITAEESELEPLVEQVRLAATRHKRGLDSRDLPGTSRAGRDAGPRAGTPTREEPV.

The Pyruvate carboxyltransferase domain maps to 22–271 (VRFCDTTLRD…KLPIDLDTTS (250 aa)). The interval 367-401 (TRHKRGLDSRDLPGTSRAGRDAGPRAGTPTREEPV) is disordered.

This sequence belongs to the alpha-IPM synthase/homocitrate synthase family.

The catalysed reaction is acetyl-CoA + 2-oxoglutarate + H2O = (2R)-homocitrate + CoA + H(+). In terms of biological role, this protein is a Fe-Mo-cofactor biosynthetic component. The protein is Homocitrate synthase (nifV) of Frankia sp. (strain FaC1).